The chain runs to 210 residues: Ribonuclease HII (210 aa).

Positions glycine 18–leucine 210 constitute an RNase H type-2 domain. Aspartate 24, glutamate 25, and aspartate 116 together coordinate a divalent metal cation.

It belongs to the RNase HII family. It depends on Mn(2+) as a cofactor. Mg(2+) is required as a cofactor.

The protein resides in the cytoplasm. The enzyme catalyses Endonucleolytic cleavage to 5'-phosphomonoester.. Its function is as follows. Endonuclease that specifically degrades the RNA of RNA-DNA hybrids. The sequence is that of Ribonuclease HII from Shewanella baltica (strain OS155 / ATCC BAA-1091).